The following is a 257-amino-acid chain: Thiazole synthase (257 aa).

The active-site Schiff-base intermediate with DXP is Lys-96. 1-deoxy-D-xylulose 5-phosphate is bound by residues Gly-157, 184–185 (AG), and 206–207 (NT).

Belongs to the ThiG family. As to quaternary structure, homotetramer. Forms heterodimers with either ThiH or ThiS.

It localises to the cytoplasm. It carries out the reaction [ThiS sulfur-carrier protein]-C-terminal-Gly-aminoethanethioate + 2-iminoacetate + 1-deoxy-D-xylulose 5-phosphate = [ThiS sulfur-carrier protein]-C-terminal Gly-Gly + 2-[(2R,5Z)-2-carboxy-4-methylthiazol-5(2H)-ylidene]ethyl phosphate + 2 H2O + H(+). Its pathway is cofactor biosynthesis; thiamine diphosphate biosynthesis. Catalyzes the rearrangement of 1-deoxy-D-xylulose 5-phosphate (DXP) to produce the thiazole phosphate moiety of thiamine. Sulfur is provided by the thiocarboxylate moiety of the carrier protein ThiS. In vitro, sulfur can be provided by H(2)S. This is Thiazole synthase from Rhizobium rhizogenes (strain K84 / ATCC BAA-868) (Agrobacterium radiobacter).